The primary structure comprises 91 residues: Small ribosomal subunit protein uS7 (91 aa).

Belongs to the universal ribosomal protein uS7 family. As to quaternary structure, part of the 30S ribosomal subunit. Contacts proteins S9 and S11.

Its function is as follows. One of the primary rRNA binding proteins, it binds directly to 16S rRNA where it nucleates assembly of the head domain of the 30S subunit. Is located at the subunit interface close to the decoding center, probably blocks exit of the E-site tRNA. The sequence is that of Small ribosomal subunit protein uS7 (rpsG) from Apple proliferation phytoplasma.